The chain runs to 131 residues: Agouti-signaling protein (131 aa).

The signal sequence occupies residues 1–22 (MDVTRLLLATLVGFLCFFTVHS). An N-linked (GlcNAc...) asparagine glycan is attached at N39. The disordered stretch occupies residues 58–100 (KSKKISRKEAEKRKRSSKKKASMKKVARPPPPSPCVATRDSCK). A compositionally biased stretch (basic residues) spans 70–84 (RKRSSKKKASMKKVA). Cystine bridges form between C92–C107, C99–C113, C106–C124, C110–C131, and C115–C122. One can recognise an Agouti domain in the interval 92-131 (CVATRDSCKPPAPACCDPCASCQCRFFGSACTCRVLNPNC).

In terms of tissue distribution, epithelial cells of the hair follicles and the epidermis.

Its subcellular location is the secreted. Its function is as follows. Involved in the regulation of melanogenesis. The binding of ASP to MC1R precludes alpha-MSH initiated signaling and thus blocks production of cAMP, leading to a down-regulation of eumelanogenesis (brown/black pigment) and thus increasing synthesis of pheomelanin (yellow/red pigment). Causes hair follicle melanocytes to synthesize phaeomelanin instead of black or brown pigment eumelanin and produces hairs with a subapical yellow band on an otherwise black or brown background when expressed during the mid-portion of hair growth. The chain is Agouti-signaling protein (Asip) from Mus musculus (Mouse).